The sequence spans 97 residues: Protein RADIALIS-like 6 (97 aa).

Residues Ser-7 to Glu-59 form the SANT domain.

As to expression, expressed in the micropylar endosperm surrounding globular-stage embryos but no expression was detected elsewhere, including floral tissues.

Its subcellular location is the nucleus. In terms of biological role, probable transcription factor. The chain is Protein RADIALIS-like 6 (RL6) from Arabidopsis thaliana (Mouse-ear cress).